The sequence spans 265 residues: Triosephosphate isomerase (265 aa).

13-15 (NWK) lines the substrate pocket. His-106 acts as the Electrophile in catalysis. The active-site Proton acceptor is Glu-179. Residues Gly-185, Ser-223, and 244 to 245 (GG) each bind substrate.

Belongs to the triosephosphate isomerase family. Homodimer.

The protein resides in the cytoplasm. It catalyses the reaction D-glyceraldehyde 3-phosphate = dihydroxyacetone phosphate. It participates in carbohydrate biosynthesis; gluconeogenesis. The protein operates within carbohydrate degradation; glycolysis; D-glyceraldehyde 3-phosphate from glycerone phosphate: step 1/1. Involved in the gluconeogenesis. Catalyzes stereospecifically the conversion of dihydroxyacetone phosphate (DHAP) to D-glyceraldehyde-3-phosphate (G3P). The sequence is that of Triosephosphate isomerase from Acinetobacter baylyi (strain ATCC 33305 / BD413 / ADP1).